We begin with the raw amino-acid sequence, 305 residues long: 3-methyl-2-oxobutanoate hydroxymethyltransferase (305 aa).

Asp-52 and Asp-95 together coordinate Mg(2+). 3-methyl-2-oxobutanoate-binding positions include Asp-52–Ser-53, Asp-95, and Lys-125. Glu-127 contributes to the Mg(2+) binding site. Glu-194 acts as the Proton acceptor in catalysis.

Belongs to the PanB family. As to quaternary structure, homodecamer; pentamer of dimers. Mg(2+) is required as a cofactor.

It localises to the cytoplasm. It carries out the reaction 3-methyl-2-oxobutanoate + (6R)-5,10-methylene-5,6,7,8-tetrahydrofolate + H2O = 2-dehydropantoate + (6S)-5,6,7,8-tetrahydrofolate. Its pathway is cofactor biosynthesis; (R)-pantothenate biosynthesis; (R)-pantoate from 3-methyl-2-oxobutanoate: step 1/2. Its function is as follows. Catalyzes the reversible reaction in which hydroxymethyl group from 5,10-methylenetetrahydrofolate is transferred onto alpha-ketoisovalerate to form ketopantoate. This is 3-methyl-2-oxobutanoate hydroxymethyltransferase from Anaeromyxobacter sp. (strain Fw109-5).